A 398-amino-acid polypeptide reads, in one-letter code: 4-hydroxy-3-methylbut-2-enyl diphosphate reductase (398 aa).

Cys66 contacts [4Fe-4S] cluster. His96 is a (2E)-4-hydroxy-3-methylbut-2-enyl diphosphate binding site. Residue His96 participates in dimethylallyl diphosphate binding. Isopentenyl diphosphate is bound at residue His96. Position 157 (Cys157) interacts with [4Fe-4S] cluster. His185 is a (2E)-4-hydroxy-3-methylbut-2-enyl diphosphate binding site. Position 185 (His185) interacts with dimethylallyl diphosphate. His185 is a binding site for isopentenyl diphosphate. The Proton donor role is filled by Glu187. Thr250 serves as a coordination point for (2E)-4-hydroxy-3-methylbut-2-enyl diphosphate. Residue Cys288 participates in [4Fe-4S] cluster binding. 4 residues coordinate (2E)-4-hydroxy-3-methylbut-2-enyl diphosphate: Ser317, Ser318, Asn319, and Ser379. Ser317, Ser318, Asn319, and Ser379 together coordinate dimethylallyl diphosphate. Residues Ser317, Ser318, Asn319, and Ser379 each coordinate isopentenyl diphosphate.

Belongs to the IspH family. It depends on [4Fe-4S] cluster as a cofactor.

It catalyses the reaction isopentenyl diphosphate + 2 oxidized [2Fe-2S]-[ferredoxin] + H2O = (2E)-4-hydroxy-3-methylbut-2-enyl diphosphate + 2 reduced [2Fe-2S]-[ferredoxin] + 2 H(+). It carries out the reaction dimethylallyl diphosphate + 2 oxidized [2Fe-2S]-[ferredoxin] + H2O = (2E)-4-hydroxy-3-methylbut-2-enyl diphosphate + 2 reduced [2Fe-2S]-[ferredoxin] + 2 H(+). Its pathway is isoprenoid biosynthesis; dimethylallyl diphosphate biosynthesis; dimethylallyl diphosphate from (2E)-4-hydroxy-3-methylbutenyl diphosphate: step 1/1. It participates in isoprenoid biosynthesis; isopentenyl diphosphate biosynthesis via DXP pathway; isopentenyl diphosphate from 1-deoxy-D-xylulose 5-phosphate: step 6/6. Its function is as follows. Catalyzes the conversion of 1-hydroxy-2-methyl-2-(E)-butenyl 4-diphosphate (HMBPP) into a mixture of isopentenyl diphosphate (IPP) and dimethylallyl diphosphate (DMAPP). Acts in the terminal step of the DOXP/MEP pathway for isoprenoid precursor biosynthesis. The polypeptide is 4-hydroxy-3-methylbut-2-enyl diphosphate reductase (Synechococcus sp. (strain ATCC 27144 / PCC 6301 / SAUG 1402/1) (Anacystis nidulans)).